Here is a 284-residue protein sequence, read N- to C-terminus: 4-hydroxybenzoate octaprenyltransferase (284 aa).

The next 8 helical transmembrane spans lie at 18–38 (PIGTLLLLWPTLWALIIAAEG), 42–62 (WHVLLVFVLGVVLMRSAGCVI), 93–113 (IILFLLLGISSFLLVLTMNPL), 136–156 (HLPQLFLGLAFSWAIPMAWAA), 161–181 (LPWVVWFVFAINALWTIAYDT), 209–229 (LIIGLLQLLTLVMLVWLGLHY), 233–253 (QSFYWSVLAAGALFVYQQHLI), and 264–284 (AFLNNNYVGMVLALGLFVAFW).

Belongs to the UbiA prenyltransferase family. Mg(2+) is required as a cofactor.

It localises to the cell inner membrane. It catalyses the reaction all-trans-octaprenyl diphosphate + 4-hydroxybenzoate = 4-hydroxy-3-(all-trans-octaprenyl)benzoate + diphosphate. It functions in the pathway cofactor biosynthesis; ubiquinone biosynthesis. Its function is as follows. Catalyzes the prenylation of para-hydroxybenzoate (PHB) with an all-trans polyprenyl group. Mediates the second step in the final reaction sequence of ubiquinone-8 (UQ-8) biosynthesis, which is the condensation of the polyisoprenoid side chain with PHB, generating the first membrane-bound Q intermediate 3-octaprenyl-4-hydroxybenzoate. The chain is 4-hydroxybenzoate octaprenyltransferase from Vibrio vulnificus (strain CMCP6).